Reading from the N-terminus, the 489-residue chain is Cytochrome P450 monooxygenase orf5 (489 aa).

A helical transmembrane segment spans residues 13–35 (FVRLLAFHLIGLFVSITVYRLFF). N-linked (GlcNAc...) asparagine glycosylation is found at N37, N118, N171, and N345. C428 provides a ligand contact to heme.

Belongs to the cytochrome P450 family. Heme is required as a cofactor.

The protein localises to the membrane. It functions in the pathway mycotoxin biosynthesis. In terms of biological role, cytochrome P450 monooxygenase; part of the gene cluster that mediates the biosynthesis of brefeldin A (BFA), a protein transport inhibitor that shows antiviral, antifungal, and antitumor properties. The proposed biosynthesis of BFA involves formation of an acyclic polyketide chain that is differentially tailored throughout the backbone. The highly reducing polyketide synthase Bref-PKS is proposed to synthesize the precisely reduced octaketide precursor, which could then be directly offloaded by the thiohydrolase enzyme Bref-TH followed by a cytochrome P450 monooxygenase-mediated formation of the cyclopentane ring and macrocyclization to afford 7-deoxy BFA. Alternatively, the first ring annulation can also occur on the ACP-tethered intermediate before the thiohydrolase release and lactonization. The C7-hydroxylation by another cytochrome P450 monooxygenase is believed to be the final step in the process to obtain the final structure of BFA. In addition to the HRPKS Bref-PKS and the thiohydrolase Bref-TH, the brefeldin A biosynthesis cluster contains 4 cytochrome p450 monooxygenases (called orf3 to orf6), as well a the probable cluster-specific transcription regulator orf8. The sequence is that of Cytochrome P450 monooxygenase orf5 from Eupenicillium brefeldianum (Penicillium brefeldianum).